The chain runs to 232 residues: tRNA (guanine-N(1)-)-methyltransferase (232 aa).

Residues glycine 112 and 132–137 (IGDYVL) each bind S-adenosyl-L-methionine.

Belongs to the RNA methyltransferase TrmD family. Homodimer.

The protein resides in the cytoplasm. It carries out the reaction guanosine(37) in tRNA + S-adenosyl-L-methionine = N(1)-methylguanosine(37) in tRNA + S-adenosyl-L-homocysteine + H(+). Specifically methylates guanosine-37 in various tRNAs. In Anaplasma phagocytophilum (strain HZ), this protein is tRNA (guanine-N(1)-)-methyltransferase.